The following is a 260-amino-acid chain: Indole-3-glycerol phosphate synthase (260 aa).

This sequence belongs to the TrpC family.

The catalysed reaction is 1-(2-carboxyphenylamino)-1-deoxy-D-ribulose 5-phosphate + H(+) = (1S,2R)-1-C-(indol-3-yl)glycerol 3-phosphate + CO2 + H2O. The protein operates within amino-acid biosynthesis; L-tryptophan biosynthesis; L-tryptophan from chorismate: step 4/5. The sequence is that of Indole-3-glycerol phosphate synthase from Thermoanaerobacter sp. (strain X514).